Consider the following 217-residue polypeptide: MRLRNKPWAQKLVVEHPEAILNEPDPEKKINWEERFDDFSKPLAIEIGSGKGQFITTLAKKHPEMNFIGVELQTTAAGMILRTKLEEKIDNLQLMCADAANIAMYLPENSVDVVYLNFSDPWPKTRHEKRRLTYKSFLDKYRQILKPEGHLEFKTDNQGLFEYSLVSLNNYGMKFDYVSLDLHHAENEILERNVETEYEHKFAAKGNPIYCLHAHFE.

S-adenosyl-L-methionine is bound by residues E46, E71, D98, and D120. The active site involves D120. K124 contacts substrate. Residues 126–131 (RHEKRR) are interaction with RNA. Residues D156 and 196–199 (TEYE) each bind substrate.

Belongs to the class I-like SAM-binding methyltransferase superfamily. TrmB family.

The enzyme catalyses guanosine(46) in tRNA + S-adenosyl-L-methionine = N(7)-methylguanosine(46) in tRNA + S-adenosyl-L-homocysteine. It participates in tRNA modification; N(7)-methylguanine-tRNA biosynthesis. Catalyzes the formation of N(7)-methylguanine at position 46 (m7G46) in tRNA. The protein is tRNA (guanine-N(7)-)-methyltransferase of Lactobacillus gasseri (strain ATCC 33323 / DSM 20243 / BCRC 14619 / CIP 102991 / JCM 1131 / KCTC 3163 / NCIMB 11718 / NCTC 13722 / AM63).